The sequence spans 195 residues: ATP-dependent Clp protease proteolytic subunit 2 (195 aa).

Residue Ser98 is the Nucleophile of the active site. His123 is an active-site residue.

The protein belongs to the peptidase S14 family. As to quaternary structure, fourteen ClpP subunits assemble into 2 heptameric rings which stack back to back to give a disk-like structure with a central cavity, resembling the structure of eukaryotic proteasomes.

It is found in the cytoplasm. It catalyses the reaction Hydrolysis of proteins to small peptides in the presence of ATP and magnesium. alpha-casein is the usual test substrate. In the absence of ATP, only oligopeptides shorter than five residues are hydrolyzed (such as succinyl-Leu-Tyr-|-NHMec, and Leu-Tyr-Leu-|-Tyr-Trp, in which cleavage of the -Tyr-|-Leu- and -Tyr-|-Trp bonds also occurs).. Cleaves peptides in various proteins in a process that requires ATP hydrolysis. Has a chymotrypsin-like activity. Plays a major role in the degradation of misfolded proteins. This is ATP-dependent Clp protease proteolytic subunit 2 from Rhodopirellula baltica (strain DSM 10527 / NCIMB 13988 / SH1).